A 192-amino-acid chain; its full sequence is uncharacterized protein (192 aa).

The Nudix hydrolase domain maps to 29–160; sequence QRQAAVLVPI…PLDIHRRGND (132 aa). The Nudix box motif lies at 67 to 89; sequence GAVDNTDATLIAAALREAQEEVA. Residues E83 and E87 each contribute to the Mg(2+) site.

This sequence belongs to the Nudix hydrolase family. PCD1 subfamily. Mn(2+) serves as cofactor. It depends on Mg(2+) as a cofactor.

Probably mediates the hydrolysis of some nucleoside diphosphate derivatives. This is an uncharacterized protein from Klebsiella pneumoniae subsp. pneumoniae (strain ATCC 700721 / MGH 78578).